We begin with the raw amino-acid sequence, 253 residues long: Sulfate transporter CysZ (253 aa).

The next 4 membrane-spanning stretches (helical) occupy residues 31–51, 75–95, 151–171, and 222–242; these read FVILPLLVNILLMGGAFWWLF, LLWPLAVISVLLVFGYFFSTI, IVLLILYFIPGIGQTVAPVLW, and IPLLNLFIMPVAVCGATAMWV.

The protein belongs to the CysZ family.

It is found in the cell inner membrane. In terms of biological role, high affinity, high specificity proton-dependent sulfate transporter, which mediates sulfate uptake. Provides the sulfur source for the cysteine synthesis pathway. In Shigella flexneri serotype 5b (strain 8401), this protein is Sulfate transporter CysZ.